We begin with the raw amino-acid sequence, 174 residues long: MEYVVARVGRPHGVRGEVTVEVRTDDPDTRFAPGAVLRTDPDRGPLTVATARWHNGTLLLTFQGVEDRTAVEGLRNTRLVVDLDDEADPDDDAWYPHQLQGLAAVTTTGTPLGTVKDLLTGGAQDVLVVTGTDGREVLVPFVTPLVPRVDVKRGKVVLSPPGGLFVELPGEPEE.

The PRC barrel domain maps to Asp-91–Leu-164.

It belongs to the RimM family. Binds ribosomal protein uS19.

The protein localises to the cytoplasm. An accessory protein needed during the final step in the assembly of 30S ribosomal subunit, possibly for assembly of the head region. Essential for efficient processing of 16S rRNA. May be needed both before and after RbfA during the maturation of 16S rRNA. It has affinity for free ribosomal 30S subunits but not for 70S ribosomes. The chain is Ribosome maturation factor RimM from Kineococcus radiotolerans (strain ATCC BAA-149 / DSM 14245 / SRS30216).